A 259-amino-acid chain; its full sequence is AM-toxin biosynthesis protein 11 (259 aa).

Residues Arg-39–Thr-66 are disordered. A compositionally biased stretch (polar residues) spans Ile-50–Cys-64.

Its pathway is mycotoxin biosynthesis. Part of the gene clusters that mediate the biosynthesis of AM-toxins, host-selective toxins (HSTs) causing Alternaria blotch on apple, a worldwide distributed disease. AM-toxins are cyclic depsipeptides containing the 3 residues 2-hydroxy-isovaleric acid (2-HIV), dehydroalanine, L-alanine which are common for all 3 AM-toxins I to III. The fourth precursor is L-alpha-amino-methoxyphenyl-valeric acid (L-Amv) for AM-toxin I, L-alpha-amino-phenyl-valeric acid (L-Apv) for AM-toxin II, and L-alpha-amino-hydroxyphenyl-valeric acid (L-Ahv) for AM-toxin III. AM-toxins have two target sites for affecting susceptible apple cells; they cause invagination of the plasma membrane and electrolyte loss and chloroplast disorganization. The non-ribosomal peptide synthetase AMT1 contains 4 catalytic modules and is responsible for activation of each residue in AM-toxin. The aldo-keto reductase AMT2 catalyzes the conversion of 2-keto-isovaleric acid (2-KIV) to 2-hydroxy-isovaleric acid (2-HIV), one of the precursor residues incorporated by AMT1 during AM-toxin biosynthesis, by reduction of its ketone to an alcohol. The cytochrome P450 monooxygenase AMT3 and the thioesterase AMT4 are also important for AM-toxin production, but their exact function within the AM-toxin biosynthesis are not known yet. Up to 21 proteins (including AMT1 to AMT4) are predicted to be involved in AM-toxin biosynthesis since their expression ishighly up-regulated in AM-toxin-producing cultures. The protein is AM-toxin biosynthesis protein 11 of Alternaria alternata (Alternaria rot fungus).